Reading from the N-terminus, the 363-residue chain is 3-dehydroquinate synthase (363 aa).

NAD(+) is bound by residues 103–107 (GAVGD), 127–128 (TT), Lys-139, Lys-148, and 166–169 (FSET). 3 residues coordinate Zn(2+): Glu-181, His-243, and His-260.

This sequence belongs to the sugar phosphate cyclases superfamily. Dehydroquinate synthase family. Co(2+) serves as cofactor. The cofactor is Zn(2+). Requires NAD(+) as cofactor.

Its subcellular location is the cytoplasm. The catalysed reaction is 7-phospho-2-dehydro-3-deoxy-D-arabino-heptonate = 3-dehydroquinate + phosphate. It functions in the pathway metabolic intermediate biosynthesis; chorismate biosynthesis; chorismate from D-erythrose 4-phosphate and phosphoenolpyruvate: step 2/7. Its function is as follows. Catalyzes the conversion of 3-deoxy-D-arabino-heptulosonate 7-phosphate (DAHP) to dehydroquinate (DHQ). This Lysinibacillus sphaericus (strain C3-41) protein is 3-dehydroquinate synthase.